The primary structure comprises 194 residues: PRELI domain containing protein 3B (194 aa).

One can recognise a PRELI/MSF1 domain in the interval 1–172; sequence MKIWTSEHVF…VIHKLNAEIE (172 aa). 2 positions are modified to phosphoserine: Ser-46 and Ser-51.

The protein belongs to the slowmo family.

This chain is PRELI domain containing protein 3B (PRELID3B), found in Homo sapiens (Human).